Consider the following 569-residue polypeptide: Potassium-transporting ATPase potassium-binding subunit (569 aa).

10 helical membrane passes run 11–31 (LLLALVFLTIKPLGLYIACVF), 64–84 (LAYTLAMLAFNAAGFLALYGI), 135–155 (AGLAVQNFLSAATGIAIALAV), 179–199 (LYLLLPMSIVLALVFVWMGIP), 258–278 (FNILAMMSITMALIYAFGKMV), 285–305 (WALIASVAVLLIAGIAAVYIA), 384–404 (GLYGLIVFCVLTVFVAGLMVG), 423–443 (MLAVLVLPFAILGFSAIAAVL), 490–510 (LGISMALGRFAYAVPVLAIAG), and 531–551 (LFVGLLVAIIIILGGLQYFPA).

This sequence belongs to the KdpA family. The system is composed of three essential subunits: KdpA, KdpB and KdpC.

Its subcellular location is the cell inner membrane. Its function is as follows. Part of the high-affinity ATP-driven potassium transport (or Kdp) system, which catalyzes the hydrolysis of ATP coupled with the electrogenic transport of potassium into the cytoplasm. This subunit binds the periplasmic potassium ions and delivers the ions to the membrane domain of KdpB through an intramembrane tunnel. The chain is Potassium-transporting ATPase potassium-binding subunit from Allorhizobium ampelinum (strain ATCC BAA-846 / DSM 112012 / S4) (Agrobacterium vitis (strain S4)).